The chain runs to 188 residues: Zinc finger protein 428 (188 aa).

The segment at 1–162 is disordered; it reads MTETREPAET…EEEEEEGTYH (162 aa). Acidic residues predominate over residues 40 to 61; it reads PDSEEEEDEEEEEEETTDDPEY. Low complexity predominate over residues 84-94; that stretch reads RAAQPPAQPCQ. A Phosphothreonine modification is found at Thr-108. The span at 116-129 shows a compositional bias: low complexity; that stretch reads PATAPQEAPAPEGR. Basic and acidic residues predominate over residues 138-149; that stretch reads PPRAGEGRPAGR. The C2H2-type zinc finger occupies 161-183; sequence YHCTECEDSFDNLGELHGHFMLH.

The protein is Zinc finger protein 428 (ZNF428) of Homo sapiens (Human).